Reading from the N-terminus, the 192-residue chain is Fe/S biogenesis protein NfuA (192 aa).

[4Fe-4S] cluster contacts are provided by cysteine 149 and cysteine 152.

The protein belongs to the NfuA family. Homodimer. The cofactor is [4Fe-4S] cluster.

Its function is as follows. Involved in iron-sulfur cluster biogenesis. Binds a 4Fe-4S cluster, can transfer this cluster to apoproteins, and thereby intervenes in the maturation of Fe/S proteins. Could also act as a scaffold/chaperone for damaged Fe/S proteins. This chain is Fe/S biogenesis protein NfuA, found in Shewanella pealeana (strain ATCC 700345 / ANG-SQ1).